The primary structure comprises 379 residues: Succinyl-diaminopimelate desuccinylase (379 aa).

Position 68 (His68) interacts with Zn(2+). Asp70 is an active-site residue. Asp101 contacts Zn(2+). The Proton acceptor role is filled by Glu135. Residues Glu136, Glu164, and His350 each coordinate Zn(2+).

The protein belongs to the peptidase M20A family. DapE subfamily. Homodimer. Requires Zn(2+) as cofactor. The cofactor is Co(2+).

The enzyme catalyses N-succinyl-(2S,6S)-2,6-diaminopimelate + H2O = (2S,6S)-2,6-diaminopimelate + succinate. The protein operates within amino-acid biosynthesis; L-lysine biosynthesis via DAP pathway; LL-2,6-diaminopimelate from (S)-tetrahydrodipicolinate (succinylase route): step 3/3. In terms of biological role, catalyzes the hydrolysis of N-succinyl-L,L-diaminopimelic acid (SDAP), forming succinate and LL-2,6-diaminopimelate (DAP), an intermediate involved in the bacterial biosynthesis of lysine and meso-diaminopimelic acid, an essential component of bacterial cell walls. The protein is Succinyl-diaminopimelate desuccinylase of Bordetella parapertussis (strain 12822 / ATCC BAA-587 / NCTC 13253).